The following is a 219-amino-acid chain: ATP-dependent Clp protease proteolytic subunit 1, mitochondrial (219 aa).

A mitochondrion-targeting transit peptide spans 1–23 (MLRRILTTSSVRNLTSSTQARVG). Residue Ser118 is the Nucleophile of the active site. Residue His143 is part of the active site.

This sequence belongs to the peptidase S14 family. As to quaternary structure, tetradecamer that assembles into a two heptameric rings with a central cavity.

Its subcellular location is the mitochondrion matrix. The catalysed reaction is Hydrolysis of proteins to small peptides in the presence of ATP and magnesium. alpha-casein is the usual test substrate. In the absence of ATP, only oligopeptides shorter than five residues are hydrolyzed (such as succinyl-Leu-Tyr-|-NHMec, and Leu-Tyr-Leu-|-Tyr-Trp, in which cleavage of the -Tyr-|-Leu- and -Tyr-|-Trp bonds also occurs).. Functionally, clp cleaves peptides in various proteins in a process that requires ATP hydrolysis. Clp may be responsible for a fairly general and central housekeeping function rather than for the degradation of specific substrates. In Caenorhabditis briggsae, this protein is ATP-dependent Clp protease proteolytic subunit 1, mitochondrial.